The following is a 200-amino-acid chain: Pyrrolidone-carboxylate peptidase (200 aa).

Active-site residues include glutamate 79, cysteine 142, and histidine 166.

It belongs to the peptidase C15 family. As to quaternary structure, homotetramer.

It is found in the cytoplasm. It carries out the reaction Release of an N-terminal pyroglutamyl group from a polypeptide, the second amino acid generally not being Pro.. Functionally, removes 5-oxoproline from various penultimate amino acid residues except L-proline. The sequence is that of Pyrrolidone-carboxylate peptidase (pcp) from Pyrococcus abyssi (strain GE5 / Orsay).